The sequence spans 2290 residues: Armadillo repeat-containing X-linked protein 4 (2290 aa).

The chain crosses the membrane as a helical span at residues 7 to 24 (VGWVTAGLVIWAGTCYYI). 8 disordered regions span residues 517-549 (QGEALPNTRGKARGKAKAKCKTGPGMDMKTCTQ), 564-583 (SRVDGRGNPNATSKAGTKAD), 967-988 (KVRGNSNAVPKAEAGADTVGSA), 1014-1087 (AVPK…ACRK), 1302-1430 (GSWA…ANSG), 1521-1715 (GSWG…RSED), 1911-1931 (SNTFRSKSGKDASFESGAGDN), and 1954-1973 (NENTSEDKSAPKAKAKKSSE). The span at 526-536 (GKARGKAKAKC) shows a compositional bias: basic residues. Residues 1073-1087 (TSESEGGSGTQACRK) are compositionally biased toward polar residues. Composition is skewed to gly residues over residues 1328 to 1341 (SWAGAGGQASGGSM) and 1403 to 1414 (AGAGGQAGGGSK). A compositionally biased stretch (polar residues) spans 1419 to 1430 (DQSSGRSWANSG). Residues 1521 to 1535 (GSWGGASGQDVGGSR) show a composition bias toward gly residues. Residues 1537–1558 (GPTNQSSAGSWDSPGSQVSGSC) are compositionally biased toward polar residues. 2 stretches are compositionally biased toward gly residues: residues 1581–1598 (IGGGFWPGAGDQTGGGSR) and 1609–1623 (GSWGVAGGQVLGGAR). Polar residues predominate over residues 1628–1645 (DQSSGGSWAGTGNQSSGR). Low complexity predominate over residues 1674–1687 (GAGSQASGESWAGS). ARM repeat units lie at residues 2031–2071 (RCKH…NSAD), 2073–2112 (SYSHEVVRNVGGISVIESLLNNPYPSVRQKALNALNNISV), 2153–2192 (ITSEYQHMVTNYISEFLRLLTVGSGETKDHVLGMLLNFSK), and 2194–2234 (PSMT…NINY).

The protein belongs to the eutherian X-chromosome-specific Armcx family.

Its subcellular location is the membrane. The sequence is that of Armadillo repeat-containing X-linked protein 4 (ARMCX4) from Homo sapiens (Human).